Here is a 506-residue protein sequence, read N- to C-terminus: Zinc finger and SCAN domain containing protein 4F (506 aa).

Positions 1–24 (MASQQAPAKDLQTNNLEFTPTDSS) are disordered. The region spanning 37-119 (SAQLNFSPSN…RFMESLTDEC (83 aa)) is the SCAN box domain. 4 C2H2-type zinc fingers span residues 395–417 (YKCE…QRTH), 424–446 (LLCV…EIIH), 452–474 (FKCS…EMIH), and 480–503 (YVCS…RNYH).

In terms of tissue distribution, up-regulated in blastocyst outgrowths and is detectable in a mosaic fashion in ES cultures.

Its subcellular location is the nucleus. It is found in the chromosome. The protein localises to the telomere. Functionally, transcription factor required to regulate early development. Binds telomeres and plays a key role in genomic stability by regulating telomere elongation. Acts as an activator of spontaneous telomere sister chromatid exchange (T-SCE) and telomere elongation. This is Zinc finger and SCAN domain containing protein 4F (Zscan4f) from Mus musculus (Mouse).